We begin with the raw amino-acid sequence, 584 residues long: Gag-Pro polyprotein (584 aa).

Gly-2 carries the N-myristoyl glycine; by host lipid modification. Residues 95-116 (EAPPSAPLAEDPQKPPPYPEQA) form a disordered region. Residues 98-101 (PSAP) carry the PTAP/PSAP motif motif. The PPXY motif motif lies at 109-112 (PPPY). CCHC-type zinc fingers lie at residues 349–366 (QPCF…DCKQ) and 372–389 (GPCP…DCPQ). The Peptidase A2 domain occupies 457–535 (VQALLDTGAD…NQWTILGRDA (79 aa)). Asp-462 serves as the catalytic For protease activity; shared with dimeric partner.

In terms of assembly, interacts with human TSG101. This interaction is essential for budding and release of viral particles. Specific enzymatic cleavages by the viral protease yield mature proteins. The polyprotein is cleaved during and after budding, this process is termed maturation. The protease is autoproteolytically processed at its N- and C-termini.

It localises to the virion. In terms of biological role, matrix protein p19 targets Gag, Gag-Pro and Gag-Pro-Pol polyproteins to the plasma membrane via a multipartite membrane binding signal, that includes its myristoylated N-terminus. Also mediates nuclear localization of the preintegration complex. Capsid protein p24 forms the conical core of the virus that encapsulates the genomic RNA-nucleocapsid complex. Its function is as follows. Nucleocapsid protein p15 is involved in the packaging and encapsidation of two copies of the genome. Functionally, the aspartyl protease mediates proteolytic cleavages of Gag, Gag-Pro and Gag-Pro-Pol polyproteins during or shortly after the release of the virion from the plasma membrane. Cleavages take place as an ordered, step-wise cascade to yield mature proteins. This process is called maturation. Displays maximal activity during the budding process just prior to particle release from the cell. Hydrolyzes host EIF4GI in order to shut off the capped cellular mRNA translation. The resulting inhibition of cellular protein synthesis serves to ensure maximal viral gene expression and to evade host immune response. This chain is Gag-Pro polyprotein (gag-pro), found in Homo sapiens (Human).